A 323-amino-acid chain; its full sequence is Methionyl-tRNA formyltransferase (323 aa).

117–120 contributes to the (6S)-5,6,7,8-tetrahydrofolate binding site; it reads SLLP.

The protein belongs to the Fmt family.

The catalysed reaction is L-methionyl-tRNA(fMet) + (6R)-10-formyltetrahydrofolate = N-formyl-L-methionyl-tRNA(fMet) + (6S)-5,6,7,8-tetrahydrofolate + H(+). Its function is as follows. Attaches a formyl group to the free amino group of methionyl-tRNA(fMet). The formyl group appears to play a dual role in the initiator identity of N-formylmethionyl-tRNA by promoting its recognition by IF2 and preventing the misappropriation of this tRNA by the elongation apparatus. In Acidovorax ebreus (strain TPSY) (Diaphorobacter sp. (strain TPSY)), this protein is Methionyl-tRNA formyltransferase.